Consider the following 598-residue polypeptide: Chaperone protein DnaK (598 aa).

T180 is modified (phosphothreonine; by autocatalysis).

Belongs to the heat shock protein 70 family.

Functionally, acts as a chaperone. The sequence is that of Chaperone protein DnaK from Thermosipho africanus (strain TCF52B).